A 74-amino-acid polypeptide reads, in one-letter code: Lambda-hexatoxin-Hv1e (74 aa).

The N-terminal stretch at 1–22 (MNTATCFIVLLVVATVIGGIEA) is a signal peptide. A propeptide spanning residues 23 to 35 (GEFDMRKDVMGLF) is cleaved from the precursor. Cystine bridges form between C40–C54, C47–C59, C50–C51, and C53–C69.

The protein belongs to the neurotoxin 11 (kappa toxin) family. Expressed by the venom gland.

It localises to the secreted. Its function is as follows. This excitatory toxin inhibits insect calcium-activated potassium (KCa) channels (Slo-type). This is Lambda-hexatoxin-Hv1e from Hadronyche versuta (Blue mountains funnel-web spider).